The primary structure comprises 124 residues: Small ribosomal subunit protein bS6 (124 aa).

The protein belongs to the bacterial ribosomal protein bS6 family.

Binds together with bS18 to 16S ribosomal RNA. This chain is Small ribosomal subunit protein bS6, found in Haemophilus ducreyi (strain 35000HP / ATCC 700724).